We begin with the raw amino-acid sequence, 111 residues long: Kalata-B7 (111 aa).

The N-terminal stretch at 1–28 is a signal peptide; sequence MAKFTNCLALCLLLAAVVGAFGVELSEA. Positions 29–75 are excised as a propeptide; it reads DKSAVVNEIAEKMALQEMLDGVDKLFLRKMKSSETTLTMFLKEMQLK. Residues 76-104 constitute a cross-link (cyclopeptide (Gly-Asn)); the sequence is GLPVCGETCTLGTCYTQGCTCSWPICKRN. 3 disulfide bridges follow: cysteine 80/cysteine 94, cysteine 84/cysteine 96, and cysteine 89/cysteine 101. Residues 105–111 constitute a propeptide that is removed on maturation; that stretch reads GLPDVAA.

Kalata-B7 is a cyclic peptide.

Its function is as follows. Probably participates in a plant defense mechanism. Has hemolytic activity. The polypeptide is Kalata-B7 (OAK3) (Oldenlandia affinis).